The primary structure comprises 313 residues: Protoheme IX farnesyltransferase (313 aa).

9 consecutive transmembrane segments (helical) span residues 22-42, 46-66, 98-118, 121-141, 150-170, 177-197, 223-243, 246-266, and 284-304; these read FALLKPRVMSLVVFTAFVGLM, IGVHPVIGFCAILFIAIGGGA, GEALSLGLALSGLSVIMLALA, VFAGAFLAFTIFFYVVIYTMW, IVIGGAAGAFPPVIGWIAATG, WLMFALTFLWTPPHFWALALF, ILVYTVILAAFALTTAFTSVG, IYLTTAVVLNALFLKGAVQIW, and FFKLSLLYLFLHFGAILAEAL.

Belongs to the UbiA prenyltransferase family. Protoheme IX farnesyltransferase subfamily. As to quaternary structure, interacts with CtaA.

The protein localises to the cell inner membrane. It carries out the reaction heme b + (2E,6E)-farnesyl diphosphate + H2O = Fe(II)-heme o + diphosphate. Its pathway is porphyrin-containing compound metabolism; heme O biosynthesis; heme O from protoheme: step 1/1. Its function is as follows. Converts heme B (protoheme IX) to heme O by substitution of the vinyl group on carbon 2 of heme B porphyrin ring with a hydroxyethyl farnesyl side group. This chain is Protoheme IX farnesyltransferase, found in Ruegeria sp. (strain TM1040) (Silicibacter sp.).